The chain runs to 64 residues: Small ribosomal subunit protein eS17 (64 aa).

This sequence belongs to the eukaryotic ribosomal protein eS17 family.

In Methanosarcina barkeri (strain Fusaro / DSM 804), this protein is Small ribosomal subunit protein eS17.